We begin with the raw amino-acid sequence, 298 residues long: Cobalt-precorrin-5B C(1)-methyltransferase (298 aa).

The protein belongs to the CbiD family.

It catalyses the reaction Co-precorrin-5B + S-adenosyl-L-methionine = Co-precorrin-6A + S-adenosyl-L-homocysteine. It functions in the pathway cofactor biosynthesis; adenosylcobalamin biosynthesis; cob(II)yrinate a,c-diamide from sirohydrochlorin (anaerobic route): step 6/10. Catalyzes the methylation of C-1 in cobalt-precorrin-5B to form cobalt-precorrin-6A. In Archaeoglobus fulgidus (strain ATCC 49558 / DSM 4304 / JCM 9628 / NBRC 100126 / VC-16), this protein is Cobalt-precorrin-5B C(1)-methyltransferase.